Reading from the N-terminus, the 426-residue chain is D-tagatose-1,6-bisphosphate aldolase subunit KbaZ (426 aa).

Belongs to the GatZ/KbaZ family. KbaZ subfamily. Forms a complex with KbaY.

It functions in the pathway carbohydrate metabolism; D-tagatose 6-phosphate degradation; D-glyceraldehyde 3-phosphate and glycerone phosphate from D-tagatose 6-phosphate: step 2/2. In terms of biological role, component of the tagatose-1,6-bisphosphate aldolase KbaYZ that is required for full activity and stability of the Y subunit. Could have a chaperone-like function for the proper and stable folding of KbaY. When expressed alone, KbaZ does not show any aldolase activity. The sequence is that of D-tagatose-1,6-bisphosphate aldolase subunit KbaZ from Escherichia coli (strain K12 / MC4100 / BW2952).